Reading from the N-terminus, the 211-residue chain is Adenylate kinase (211 aa).

ATP is bound at residue 10 to 15 (GSGKGT). Residues 30–59 (STGDLFRENILNSTALGQEIKKIVERGELV) are NMP. Residues threonine 31, arginine 36, 57-59 (ELV), 85-88 (GFPR), and glutamine 92 each bind AMP. Residues 121 to 158 (GRRICKSCNNIFNIYTLTTKKNGICDVCGGDLYQREDD) form an LID region. ATP is bound at residue arginine 122. 2 residues coordinate Zn(2+): cysteine 125 and cysteine 128. Position 131–132 (131–132 (IF)) interacts with ATP. Zn(2+) contacts are provided by cysteine 145 and cysteine 148. Residues arginine 155 and arginine 166 each coordinate AMP. Residue valine 194 coordinates ATP.

This sequence belongs to the adenylate kinase family. Monomer.

The protein localises to the cytoplasm. It carries out the reaction AMP + ATP = 2 ADP. It participates in purine metabolism; AMP biosynthesis via salvage pathway; AMP from ADP: step 1/1. Catalyzes the reversible transfer of the terminal phosphate group between ATP and AMP. Plays an important role in cellular energy homeostasis and in adenine nucleotide metabolism. The chain is Adenylate kinase from Borreliella burgdorferi (strain ATCC 35210 / DSM 4680 / CIP 102532 / B31) (Borrelia burgdorferi).